A 396-amino-acid chain; its full sequence is Acetate kinase (396 aa).

Asn8 is a binding site for Mg(2+). Lys15 is an ATP binding site. Arg89 provides a ligand contact to substrate. Asp146 functions as the Proton donor/acceptor in the catalytic mechanism. ATP is bound by residues 206 to 210, 283 to 285, and 331 to 335; these read HIGNG, DMR, and GVGEN. A Mg(2+)-binding site is contributed by Glu383.

Belongs to the acetokinase family. As to quaternary structure, homodimer. Requires Mg(2+) as cofactor. Mn(2+) is required as a cofactor.

It is found in the cytoplasm. It catalyses the reaction acetate + ATP = acetyl phosphate + ADP. Its pathway is metabolic intermediate biosynthesis; acetyl-CoA biosynthesis; acetyl-CoA from acetate: step 1/2. Catalyzes the formation of acetyl phosphate from acetate and ATP. Can also catalyze the reverse reaction. This Streptococcus pneumoniae (strain 70585) protein is Acetate kinase.